The chain runs to 223 residues: Ribosomal RNA small subunit methyltransferase G (223 aa).

S-adenosyl-L-methionine-binding positions include glycine 82, leucine 87, 133 to 134 (AE), and arginine 151.

This sequence belongs to the methyltransferase superfamily. RNA methyltransferase RsmG family.

The protein localises to the cytoplasm. Specifically methylates the N7 position of guanine in position 518 of 16S rRNA. The chain is Ribosomal RNA small subunit methyltransferase G from Corynebacterium glutamicum (strain R).